The chain runs to 457 residues: GTPase Der (457 aa).

EngA-type G domains are found at residues 4-169 and 177-352; these read PTIA…PENN and IMMS…NQHR. GTP contacts are provided by residues 10–17, 57–61, 120–123, 183–190, 230–234, and 295–298; these read GRPNVGKS, DTGGL, NKCE, DTAGI, and NKWD. The KH-like domain maps to 353–438; it reads RRVTTSVVNE…PLILLWRGKQ (86 aa).

The protein belongs to the TRAFAC class TrmE-Era-EngA-EngB-Septin-like GTPase superfamily. EngA (Der) GTPase family. In terms of assembly, associates with the 50S ribosomal subunit.

GTPase that plays an essential role in the late steps of ribosome biogenesis. The chain is GTPase Der from Prochlorococcus marinus (strain MIT 9215).